Reading from the N-terminus, the 477-residue chain is Aspartyl/glutamyl-tRNA(Asn/Gln) amidotransferase subunit B (477 aa).

It belongs to the GatB/GatE family. GatB subfamily. In terms of assembly, heterotrimer of A, B and C subunits.

It carries out the reaction L-glutamyl-tRNA(Gln) + L-glutamine + ATP + H2O = L-glutaminyl-tRNA(Gln) + L-glutamate + ADP + phosphate + H(+). It catalyses the reaction L-aspartyl-tRNA(Asn) + L-glutamine + ATP + H2O = L-asparaginyl-tRNA(Asn) + L-glutamate + ADP + phosphate + 2 H(+). Its function is as follows. Allows the formation of correctly charged Asn-tRNA(Asn) or Gln-tRNA(Gln) through the transamidation of misacylated Asp-tRNA(Asn) or Glu-tRNA(Gln) in organisms which lack either or both of asparaginyl-tRNA or glutaminyl-tRNA synthetases. The reaction takes place in the presence of glutamine and ATP through an activated phospho-Asp-tRNA(Asn) or phospho-Glu-tRNA(Gln). The polypeptide is Aspartyl/glutamyl-tRNA(Asn/Gln) amidotransferase subunit B (Ureaplasma urealyticum serovar 10 (strain ATCC 33699 / Western)).